The following is a 185-amino-acid chain: Large ribosomal subunit protein uL22 (185 aa).

This sequence belongs to the universal ribosomal protein uL22 family. Part of the 50S ribosomal subunit.

Functionally, this protein binds specifically to 23S rRNA. It makes multiple contacts with different domains of the 23S rRNA in the assembled 50S subunit and ribosome. The globular domain of the protein is located near the polypeptide exit tunnel on the outside of the subunit, while an extended beta-hairpin is found that lines the wall of the exit tunnel in the center of the 70S ribosome. The protein is Large ribosomal subunit protein uL22 of Pyrobaculum aerophilum (strain ATCC 51768 / DSM 7523 / JCM 9630 / CIP 104966 / NBRC 100827 / IM2).